The sequence spans 210 residues: Ribonuclease HII (210 aa).

The 202-residue stretch at 2–203 (SGVMGIDEAG…YKRVESEVKQ (202 aa)) folds into the RNase H type-2 domain. The a divalent metal cation site is built by Asp-8, Glu-9, and Asp-99.

This sequence belongs to the RNase HII family. It depends on Mn(2+) as a cofactor. Mg(2+) is required as a cofactor.

It localises to the cytoplasm. The enzyme catalyses Endonucleolytic cleavage to 5'-phosphomonoester.. Functionally, endonuclease that specifically degrades the RNA of RNA-DNA hybrids. The chain is Ribonuclease HII from Methanopyrus kandleri (strain AV19 / DSM 6324 / JCM 9639 / NBRC 100938).